Reading from the N-terminus, the 398-residue chain is Acetate kinase (398 aa).

Asn-9 is a Mg(2+) binding site. Residue Lys-16 participates in ATP binding. Arg-93 serves as a coordination point for substrate. Catalysis depends on Asp-150, which acts as the Proton donor/acceptor. ATP contacts are provided by residues 209-213 (HLGAG), 284-286 (DMR), and 329-333 (GIGEH). Glu-382 is a Mg(2+) binding site.

The protein belongs to the acetokinase family. In terms of assembly, homodimer. Mg(2+) is required as a cofactor. Requires Mn(2+) as cofactor.

The protein resides in the cytoplasm. It catalyses the reaction acetate + ATP = acetyl phosphate + ADP. Its pathway is metabolic intermediate biosynthesis; acetyl-CoA biosynthesis; acetyl-CoA from acetate: step 1/2. In terms of biological role, catalyzes the formation of acetyl phosphate from acetate and ATP. Can also catalyze the reverse reaction. The chain is Acetate kinase from Rhodopseudomonas palustris (strain TIE-1).